The following is a 476-amino-acid chain: Aspartyl/glutamyl-tRNA(Asn/Gln) amidotransferase subunit B (476 aa).

This sequence belongs to the GatB/GatE family. GatB subfamily. In terms of assembly, heterotrimer of A, B and C subunits.

The enzyme catalyses L-glutamyl-tRNA(Gln) + L-glutamine + ATP + H2O = L-glutaminyl-tRNA(Gln) + L-glutamate + ADP + phosphate + H(+). It carries out the reaction L-aspartyl-tRNA(Asn) + L-glutamine + ATP + H2O = L-asparaginyl-tRNA(Asn) + L-glutamate + ADP + phosphate + 2 H(+). In terms of biological role, allows the formation of correctly charged Asn-tRNA(Asn) or Gln-tRNA(Gln) through the transamidation of misacylated Asp-tRNA(Asn) or Glu-tRNA(Gln) in organisms which lack either or both of asparaginyl-tRNA or glutaminyl-tRNA synthetases. The reaction takes place in the presence of glutamine and ATP through an activated phospho-Asp-tRNA(Asn) or phospho-Glu-tRNA(Gln). The polypeptide is Aspartyl/glutamyl-tRNA(Asn/Gln) amidotransferase subunit B (Listeria monocytogenes serotype 4b (strain CLIP80459)).